The following is a 340-amino-acid chain: Chitinase 7 (340 aa).

An N-terminal signal peptide occupies residues 1-32 (MIAARAANLQVAMKALALAVLALAYAAATARA). One can recognise a Chitin-binding type-1 domain in the interval 33-73 (EQCGRQAGGARCPNRLCCSRWGWCGLTDDYCKGGCQSQCRV). 7 disulfides stabilise this stretch: C35–C50, C44–C56, C49–C63, C67–C71, C118–C173, C185–C193, and C293–C323.

Belongs to the glycosyl hydrolase 19 family. Chitinase class I subfamily. In terms of tissue distribution, expressed in pistils, stamens and lodicules.

It carries out the reaction Random endo-hydrolysis of N-acetyl-beta-D-glucosaminide (1-&gt;4)-beta-linkages in chitin and chitodextrins.. Its function is as follows. Hydrolyzes chitin and may play a role in defense against fungal pathogens containing chitin. In Oryza sativa subsp. indica (Rice), this protein is Chitinase 7 (Cht7).